A 469-amino-acid chain; its full sequence is Neuraminidase (469 aa).

Residues M1 to K6 lie on the Intravirion side of the membrane. Residues I7–G27 form a helical membrane-spanning segment. Residues G11–W33 form an involved in apical transport and lipid raft association region. Over N28–K469 the chain is Virion surface. The tract at residues H36–S90 is hypervariable stalk region. 6 N-linked (GlcNAc...) asparagine; by host glycosylation sites follow: N44, N50, N58, N63, N68, and N88. The head of neuraminidase stretch occupies residues L91 to K469. 8 cysteine pairs are disulfide-bonded: C92–C417, C124–C129, C184–C231, C233–C238, C279–C292, C281–C290, C318–C335, and C421–C446. R118 is a substrate binding site. A glycan (N-linked (GlcNAc...) asparagine; by host) is linked at N146. The Proton donor/acceptor role is filled by D151. R152 is a substrate binding site. Residue N235 is glycosylated (N-linked (GlcNAc...) asparagine; by host). E277–E278 lines the substrate pocket. R293 is a substrate binding site. The Ca(2+) site is built by D294, G298, D324, and N344. N-linked (GlcNAc...) asparagine; by host glycosylation is present at N365. R368 provides a ligand contact to substrate. Catalysis depends on Y402, which acts as the Nucleophile.

The protein belongs to the glycosyl hydrolase 34 family. Homotetramer. It depends on Ca(2+) as a cofactor. Post-translationally, N-glycosylated.

It is found in the virion membrane. The protein localises to the host apical cell membrane. It carries out the reaction Hydrolysis of alpha-(2-&gt;3)-, alpha-(2-&gt;6)-, alpha-(2-&gt;8)- glycosidic linkages of terminal sialic acid residues in oligosaccharides, glycoproteins, glycolipids, colominic acid and synthetic substrates.. With respect to regulation, inhibited by the neuraminidase inhibitors zanamivir (Relenza) and oseltamivir (Tamiflu). These drugs interfere with the release of progeny virus from infected cells and are effective against all influenza strains. Resistance to neuraminidase inhibitors is quite rare. Functionally, catalyzes the removal of terminal sialic acid residues from viral and cellular glycoconjugates. Cleaves off the terminal sialic acids on the glycosylated HA during virus budding to facilitate virus release. Additionally helps virus spread through the circulation by further removing sialic acids from the cell surface. These cleavages prevent self-aggregation and ensure the efficient spread of the progeny virus from cell to cell. Otherwise, infection would be limited to one round of replication. Described as a receptor-destroying enzyme because it cleaves a terminal sialic acid from the cellular receptors. May facilitate viral invasion of the upper airways by cleaving the sialic acid moieties on the mucin of the airway epithelial cells. Likely to plays a role in the budding process through its association with lipid rafts during intracellular transport. May additionally display a raft-association independent effect on budding. Plays a role in the determination of host range restriction on replication and virulence. Sialidase activity in late endosome/lysosome traffic seems to enhance virus replication. This Aves (Human) protein is Neuraminidase.